The chain runs to 1435 residues: Protein SPP41 (1435 aa).

Disordered regions lie at residues 16-74 (VGNL…NIEI), 88-265 (VANA…ENTL), 286-309 (AKQT…VEAQ), 322-424 (ELLS…DDEF), 442-482 (ETST…DSLD), 519-708 (SVSD…MKVP), and 934-972 (QQLD…AGHT). The segment covering 27–42 (GQEEGEVQGGEQEGDD) has biased composition (acidic residues). Composition is skewed to basic and acidic residues over residues 53–63 (IEPKHPDDSQH), 98–127 (EQAK…KEQQ), and 139–154 (LKSD…ERRV). The 20-residue stretch at 171 to 190 (QDDENLRMAILESLQELNTN) folds into the UIM domain. Positions 196 to 205 (EPEKHEHAAP) are enriched in basic and acidic residues. Positions 211-223 (SKKSSKKKKKDKS) are enriched in basic residues. Residues 224–234 (KNRESSKDKSS) are compositionally biased toward basic and acidic residues. The span at 235-249 (KKSKSSSHSKKHAKD) shows a compositional bias: basic residues. A compositionally biased stretch (polar residues) spans 286–301 (AKQTVDIQDNSHTDNT). Over residues 345–355 (KAVEPPRKPTA) the composition is skewed to basic and acidic residues. Basic residues predominate over residues 367–383 (KPKKRPPQEKKKTKSKT). Residues 384–398 (SKAASTANKSPASES) are compositionally biased toward low complexity. 2 stretches are compositionally biased toward polar residues: residues 442–451 (ETSTHTATQD) and 459–482 (DFTS…DSLD). 3 stretches are compositionally biased toward basic and acidic residues: residues 524–548 (LPHD…EKKT), 610–628 (KNKE…AREE), and 637–652 (KQRL…KIVE). The span at 665 to 674 (KSGKPKKPYR) shows a compositional bias: basic residues. Residues 676–691 (WTPEELLKRSQEAEKP) show a composition bias toward basic and acidic residues. Positions 683–699 (KRSQEAEKPRKVKKERK) match the Nuclear localization signal motif. Positions 692–706 (RKVKKERKKKEKKMK) are enriched in basic residues. A Glycyl lysine isopeptide (Lys-Gly) (interchain with G-Cter in SUMO) cross-link involves residue K981. A compositionally biased stretch (basic and acidic residues) spans 1005-1014 (KLELTKRAES). The tract at residues 1005–1125 (KLELTKRAES…DSVNTTTGKP (121 aa)) is disordered. Position 1014 is a phosphoserine (S1014). The span at 1021-1032 (NVETAKETQSVQ) shows a compositional bias: polar residues. Basic and acidic residues-rich tracts occupy residues 1033–1082 (EIKE…EKIA) and 1091–1103 (LSDK…KSTL). At S1067 the chain carries Phosphoserine. The segment covering 1108 to 1123 (AQLTGNEPDSVNTTTG) has biased composition (polar residues). A Glycyl lysine isopeptide (Lys-Gly) (interchain with G-Cter in SUMO) cross-link involves residue K1154.

In terms of assembly, interacts with PRP8 and RAP1.

Its subcellular location is the nucleus. Negative regulator of PRP3 and PRP4 genes. In Saccharomyces cerevisiae (strain ATCC 204508 / S288c) (Baker's yeast), this protein is Protein SPP41 (SPP41).